A 175-amino-acid chain; its full sequence is Ribosome maturation factor RimM (175 aa).

Positions 96–172 constitute a PRC barrel domain; the sequence is PDTYYDHQLE…LIEIDPPDGL (77 aa).

It belongs to the RimM family. In terms of assembly, binds ribosomal protein uS19.

It localises to the cytoplasm. Its function is as follows. An accessory protein needed during the final step in the assembly of 30S ribosomal subunit, possibly for assembly of the head region. Essential for efficient processing of 16S rRNA. May be needed both before and after RbfA during the maturation of 16S rRNA. It has affinity for free ribosomal 30S subunits but not for 70S ribosomes. This is Ribosome maturation factor RimM from Mycobacterium avium (strain 104).